Consider the following 147-residue polypeptide: Transthyretin (147 aa).

Positions 1–20 (MASFRLFLLCLAGLVFVSEA) are cleaved as a signal peptide. At C30 the chain carries Sulfocysteine. Residue K35 participates in L-thyroxine binding. E62 is modified (4-carboxyglutamate). A Phosphoserine modification is found at S72. E74 serves as a coordination point for L-thyroxine. Residue N118 is glycosylated (N-linked (GlcNAc...) asparagine). S137 is a binding site for L-thyroxine.

The protein belongs to the transthyretin family. Homotetramer. Dimer of dimers. In the homotetramer, subunits assemble around a central channel that can accommodate two ligand molecules. Interacts with RBP4. Post-translationally, sulfonation of the reactive cysteine Cys-30 enhances the stability of the native conformation of TTR, avoiding misassembly of the protein leading to amyloid formation. Detected in serum (at protein level).

It is found in the secreted. In terms of biological role, thyroid hormone-binding protein. Probably transports thyroxine from the bloodstream to the brain. This Bos taurus (Bovine) protein is Transthyretin (TTR).